A 368-amino-acid chain; its full sequence is Branched-chain-amino-acid aminotransferase (368 aa).

Residue Arg-101 participates in pyridoxal 5'-phosphate binding. Residue Lys-204 is modified to N6-(pyridoxal phosphate)lysine. Residues Tyr-209, 271–272, and Thr-314 each bind pyridoxal 5'-phosphate; that span reads IT.

It belongs to the class-IV pyridoxal-phosphate-dependent aminotransferase family. In terms of assembly, homodimer. Requires pyridoxal 5'-phosphate as cofactor.

The enzyme catalyses L-leucine + 2-oxoglutarate = 4-methyl-2-oxopentanoate + L-glutamate. It carries out the reaction L-isoleucine + 2-oxoglutarate = (S)-3-methyl-2-oxopentanoate + L-glutamate. The catalysed reaction is L-valine + 2-oxoglutarate = 3-methyl-2-oxobutanoate + L-glutamate. It functions in the pathway amino-acid biosynthesis; L-isoleucine biosynthesis; L-isoleucine from 2-oxobutanoate: step 4/4. Its pathway is amino-acid biosynthesis; L-leucine biosynthesis; L-leucine from 3-methyl-2-oxobutanoate: step 4/4. It participates in amino-acid biosynthesis; L-valine biosynthesis; L-valine from pyruvate: step 4/4. Its function is as follows. Catalyzes the reversible transfers of an amino group from glutamate to the alpha-ketoacid of the respective amino acid in the final step in the biosynthesis of branchedchain amino acids. In Mycobacterium tuberculosis (strain CDC 1551 / Oshkosh), this protein is Branched-chain-amino-acid aminotransferase (ilvE).